The chain runs to 199 residues: Pyrrolidone-carboxylate peptidase (199 aa).

Active-site residues include Glu80, Cys142, and His166.

The protein belongs to the peptidase C15 family. In terms of assembly, homotetramer.

The protein resides in the cytoplasm. It catalyses the reaction Release of an N-terminal pyroglutamyl group from a polypeptide, the second amino acid generally not being Pro.. In terms of biological role, removes 5-oxoproline from various penultimate amino acid residues except L-proline. This chain is Pyrrolidone-carboxylate peptidase, found in Oceanobacillus iheyensis (strain DSM 14371 / CIP 107618 / JCM 11309 / KCTC 3954 / HTE831).